A 194-amino-acid chain; its full sequence is MPHEPKGLNEECGVFGVWGNPNAASITHLGLHTLQHRGQEGAGIVGLTKDGMRRHYGLGLLSEVFTNTDQLTPLIGRAALGHVRYSTAGGRVLENIQPLLFRFSDEAIALAHNGNLTNAISLRRQLEDQGAIFQSTSDTEVLMHLIRRQVGQPWLTQLKTALNEVHGGFAFVLLTEHGLYAAVDPHGFRPMVVG.

Residues 1-11 (MPHEPKGLNEE) constitute a propeptide that is removed on maturation. Cys-12 (nucleophile) is an active-site residue. Residues 12–194 (CGVFGVWGNP…PHGFRPMVVG (183 aa)) form the Glutamine amidotransferase type-2 domain.

The protein in the C-terminal section; belongs to the purine/pyrimidine phosphoribosyltransferase family.

It carries out the reaction 5-phospho-beta-D-ribosylamine + L-glutamate + diphosphate = 5-phospho-alpha-D-ribose 1-diphosphate + L-glutamine + H2O. It participates in purine metabolism; IMP biosynthesis via de novo pathway; N(1)-(5-phospho-D-ribosyl)glycinamide from 5-phospho-alpha-D-ribose 1-diphosphate: step 1/2. In terms of biological role, catalyzes the formation of phosphoribosylamine from phosphoribosylpyrophosphate (PRPP) and glutamine. This chain is Amidophosphoribosyltransferase, found in Lacticaseibacillus casei (Lactobacillus casei).